The primary structure comprises 288 residues: ATP synthase gamma chain (288 aa).

Belongs to the ATPase gamma chain family. As to quaternary structure, F-type ATPases have 2 components, CF(1) - the catalytic core - and CF(0) - the membrane proton channel. CF(1) has five subunits: alpha(3), beta(3), gamma(1), delta(1), epsilon(1). CF(0) has three main subunits: a, b and c.

The protein localises to the cell inner membrane. Functionally, produces ATP from ADP in the presence of a proton gradient across the membrane. The gamma chain is believed to be important in regulating ATPase activity and the flow of protons through the CF(0) complex. The sequence is that of ATP synthase gamma chain from Rickettsia akari (strain Hartford).